Consider the following 322-residue polypeptide: Undecaprenyl-phosphate 4-deoxy-4-formamido-L-arabinose transferase (322 aa).

Over 1–235 the chain is Cytoplasmic; the sequence is MFEIHPVKKV…TCLTTTPLRM (235 aa). A helical transmembrane segment spans residues 236 to 256; it reads LSLLGSIIAIGGFSIAVLLVI. The Periplasmic segment spans residues 257 to 269; sequence LRLTFGPQWAAEG. The helical transmembrane segment at 270-290 threads the bilayer; the sequence is VFMLFAVLFTFIGAQFIGMGL. The Cytoplasmic segment spans residues 291–322; sequence LGEYIGRIYTDVRARPRYFVQQVIRPSSKENE.

Belongs to the glycosyltransferase 2 family.

It localises to the cell inner membrane. It catalyses the reaction UDP-4-deoxy-4-formamido-beta-L-arabinose + di-trans,octa-cis-undecaprenyl phosphate = 4-deoxy-4-formamido-alpha-L-arabinopyranosyl di-trans,octa-cis-undecaprenyl phosphate + UDP. It participates in glycolipid biosynthesis; 4-amino-4-deoxy-alpha-L-arabinose undecaprenyl phosphate biosynthesis; 4-amino-4-deoxy-alpha-L-arabinose undecaprenyl phosphate from UDP-4-deoxy-4-formamido-beta-L-arabinose and undecaprenyl phosphate: step 1/2. Its pathway is bacterial outer membrane biogenesis; lipopolysaccharide biosynthesis. Its function is as follows. Catalyzes the transfer of 4-deoxy-4-formamido-L-arabinose from UDP to undecaprenyl phosphate. The modified arabinose is attached to lipid A and is required for resistance to polymyxin and cationic antimicrobial peptides. This Escherichia coli O139:H28 (strain E24377A / ETEC) protein is Undecaprenyl-phosphate 4-deoxy-4-formamido-L-arabinose transferase.